The chain runs to 64 residues: Large ribosomal subunit protein bL35 (64 aa).

2 stretches are compositionally biased toward basic residues: residues 1–26 and 33–44; these read MPKMKTHRGAAKRFKKTGTGKIKRSK and LTKKSPKRKRKL. Residues 1 to 44 are disordered; it reads MPKMKTHRGAAKRFKKTGTGKIKRSKAYTSHILTKKSPKRKRKL.

Belongs to the bacterial ribosomal protein bL35 family.

This is Large ribosomal subunit protein bL35 from Alkaliphilus oremlandii (strain OhILAs) (Clostridium oremlandii (strain OhILAs)).